Consider the following 310-residue polypeptide: 4-hydroxyproline epimerase (310 aa).

Cys-88 acts as the Proton acceptor in catalysis. Substrate contacts are provided by residues 89 to 90 (GH), His-208, and Asp-232. Cys-236 (proton donor) is an active-site residue. 237 to 238 (GT) is a substrate binding site.

The protein belongs to the proline racemase family. As to quaternary structure, homodimer.

It carries out the reaction trans-4-hydroxy-L-proline = cis-4-hydroxy-D-proline. Its activity is regulated as follows. Inhibited by iodoacetate, iodoacetamide and by high amounts (10 mM) of pyrrole-2-carboxylic acid (PYC). Not inhibited by PYC at 1 mM. Functionally, allows intracellular utilization of 4-hydroxyproline, one of the major constituents of host collagen, by converting 4-hydroxy-L-proline to 4-hydroxy-D-proline, which can be further metabolized by intracellular 4-hydroxy-D-proline oxidases. This chain is 4-hydroxyproline epimerase, found in Burkholderia pseudomallei (strain K96243).